Here is a 303-residue protein sequence, read N- to C-terminus: Putative CRISPR-associated endonuclease Cas1 2 (303 aa).

Glutamate 149 is a Mn(2+) binding site.

This sequence belongs to the CRISPR-associated endonuclease Cas1 family. As to quaternary structure, homodimer, forms a heterotetramer with a Cas2 homodimer. Mg(2+) is required as a cofactor. It depends on Mn(2+) as a cofactor.

Functionally, CRISPR (clustered regularly interspaced short palindromic repeat), is an adaptive immune system that provides protection against mobile genetic elements (viruses, transposable elements and conjugative plasmids). CRISPR clusters contain sequences complementary to antecedent mobile elements and target invading nucleic acids. CRISPR clusters are transcribed and processed into CRISPR RNA (crRNA). Acts as a dsDNA endonuclease. Involved in the integration of spacer DNA into the CRISPR cassette. The sequence is that of Putative CRISPR-associated endonuclease Cas1 2 from Methanospirillum hungatei JF-1 (strain ATCC 27890 / DSM 864 / NBRC 100397 / JF-1).